Here is a 435-residue protein sequence, read N- to C-terminus: Glutamyl-tRNA reductase (435 aa).

Residues 49 to 52 (TCNR), serine 109, 114 to 116 (ETQ), and glutamine 120 each bind substrate. Cysteine 50 functions as the Nucleophile in the catalytic mechanism. 189–194 (GAGEMS) contributes to the NADP(+) binding site.

It belongs to the glutamyl-tRNA reductase family. As to quaternary structure, homodimer.

The enzyme catalyses (S)-4-amino-5-oxopentanoate + tRNA(Glu) + NADP(+) = L-glutamyl-tRNA(Glu) + NADPH + H(+). The protein operates within porphyrin-containing compound metabolism; protoporphyrin-IX biosynthesis; 5-aminolevulinate from L-glutamyl-tRNA(Glu): step 1/2. Its function is as follows. Catalyzes the NADPH-dependent reduction of glutamyl-tRNA(Glu) to glutamate 1-semialdehyde (GSA). The chain is Glutamyl-tRNA reductase from Listeria monocytogenes serotype 4a (strain HCC23).